The primary structure comprises 449 residues: Tubulin alpha-1B chain (449 aa).

Gln-11 provides a ligand contact to GTP. Lys-40 carries the post-translational modification N6-acetyllysine. GTP-binding residues include Glu-71, Ser-140, Gly-144, Thr-145, Thr-179, Asn-206, and Asn-228. Position 71 (Glu-71) interacts with Mg(2+). Glu-254 is an active-site residue.

Belongs to the tubulin family. Dimer of alpha and beta chains. A typical microtubule is a hollow water-filled tube with an outer diameter of 25 nm and an inner diameter of 15 nM. Alpha-beta heterodimers associate head-to-tail to form protofilaments running lengthwise along the microtubule wall with the beta-tubulin subunit facing the microtubule plus end conferring a structural polarity. Microtubules usually have 13 protofilaments but different protofilament numbers can be found in some organisms and specialized cells. It depends on Mg(2+) as a cofactor. Post-translationally, acetylation of alpha chains at Lys-40 stabilizes microtubules and affects affinity and processivity of microtubule motors. This modification has a role in multiple cellular functions, ranging from cell motility, cell cycle progression or cell differentiation to intracellular trafficking and signaling.

The protein localises to the cytoplasm. It is found in the cytoskeleton. Its subcellular location is the spindle. It localises to the nucleus. It carries out the reaction GTP + H2O = GDP + phosphate + H(+). Tubulin is the major constituent of microtubules, a cylinder consisting of laterally associated linear protofilaments composed of alpha- and beta-tubulin heterodimers. Microtubules grow by the addition of GTP-tubulin dimers to the microtubule end, where a stabilizing cap forms. Below the cap, tubulin dimers are in GDP-bound state, owing to GTPase activity of alpha-tubulin. The chain is Tubulin alpha-1B chain (ALTBN) from Physarum polycephalum (Slime mold).